A 141-amino-acid chain; its full sequence is D-aminoacyl-tRNA deacylase (141 aa).

The short motif at 133–134 (GP) is the Gly-cisPro motif, important for rejection of L-amino acids element.

It belongs to the DTD family. As to quaternary structure, homodimer.

The protein resides in the cytoplasm. The enzyme catalyses glycyl-tRNA(Ala) + H2O = tRNA(Ala) + glycine + H(+). It carries out the reaction a D-aminoacyl-tRNA + H2O = a tRNA + a D-alpha-amino acid + H(+). An aminoacyl-tRNA editing enzyme that deacylates mischarged D-aminoacyl-tRNAs. Also deacylates mischarged glycyl-tRNA(Ala), protecting cells against glycine mischarging by AlaRS. Acts via tRNA-based rather than protein-based catalysis; rejects L-amino acids rather than detecting D-amino acids in the active site. By recycling D-aminoacyl-tRNA to D-amino acids and free tRNA molecules, this enzyme counteracts the toxicity associated with the formation of D-aminoacyl-tRNA entities in vivo and helps enforce protein L-homochirality. The sequence is that of D-aminoacyl-tRNA deacylase from Kineococcus radiotolerans (strain ATCC BAA-149 / DSM 14245 / SRS30216).